The chain runs to 106 residues: UPF0060 membrane protein CHU_3331 (106 aa).

4 consecutive transmembrane segments (helical) span residues 5–25 (FYFI…WLHF), 31–51 (ALLL…LTKI), 59–79 (AYAV…YGIE), and 85–105 (IWDY…LFAP).

Belongs to the UPF0060 family.

Its subcellular location is the cell inner membrane. The protein is UPF0060 membrane protein CHU_3331 of Cytophaga hutchinsonii (strain ATCC 33406 / DSM 1761 / CIP 103989 / NBRC 15051 / NCIMB 9469 / D465).